Reading from the N-terminus, the 556-residue chain is Guanine nucleotide-binding protein-like 3 homolog (556 aa).

Residues 29–50 are disordered; that stretch reads NRKVKKEAKKNGTTNKKEKTIS. Positions 58–95 form a coiled coil; it reads KEEILVQAEQEREKIKVRQEAAKEAAKIHRIEKRKNNL. The region spanning 138–317 is the CP-type G domain; it reads ASEVRKTVEI…LIDSPGVILV (180 aa). GTP contacts are provided by residues 184–187, 266–273, and 310–313; these read NKID, GFPNVGKS, and DSPG. 2 disordered regions span residues 461 to 508 and 525 to 556; these read APHN…PESL and KKQK…AMEM. The segment covering 466 to 478 has biased composition (acidic residues); the sequence is DEEEDDDDEMETD. Positions 525–535 are enriched in basic residues; it reads KKQKKKSKKTA.

The protein belongs to the TRAFAC class YlqF/YawG GTPase family.

The protein resides in the nucleus. In terms of biological role, may play a role in regulating cellular proliferation in both germline and somatic tissues. The protein is Guanine nucleotide-binding protein-like 3 homolog of Caenorhabditis elegans.